A 328-amino-acid polypeptide reads, in one-letter code: Ferredoxin--NADP reductase 2 (328 aa).

Residues threonine 16, glutamate 35, glutamine 43, tyrosine 48, isoleucine 88, phenylalanine 123, aspartate 284, and threonine 325 each coordinate FAD.

This sequence belongs to the ferredoxin--NADP reductase type 2 family. As to quaternary structure, homodimer. FAD serves as cofactor.

It carries out the reaction 2 reduced [2Fe-2S]-[ferredoxin] + NADP(+) + H(+) = 2 oxidized [2Fe-2S]-[ferredoxin] + NADPH. In Oceanobacillus iheyensis (strain DSM 14371 / CIP 107618 / JCM 11309 / KCTC 3954 / HTE831), this protein is Ferredoxin--NADP reductase 2.